Reading from the N-terminus, the 362-residue chain is Putative protein ARB2BP (362 aa).

The helical transmembrane segment at 229–245 (IAFIVHGYGGLVFMDLL) threads the bilayer.

This sequence belongs to the ARB2 family.

Its subcellular location is the membrane. In Homo sapiens (Human), this protein is Putative protein ARB2BP.